A 327-amino-acid chain; its full sequence is UPF0285 protein Maeo_0978 (327 aa).

This sequence belongs to the UPF0285 family.

This Methanococcus aeolicus (strain ATCC BAA-1280 / DSM 17508 / OCM 812 / Nankai-3) protein is UPF0285 protein Maeo_0978.